A 437-amino-acid chain; its full sequence is Elongation factor 1-gamma (437 aa).

Ala2 is modified (N-acetylalanine). Residues 2-87 (AAGTLYTYPE…YVSNEELRGS (86 aa)) enclose the GST N-terminal domain. The region spanning 88–216 (TPEAAAQVVQ…VKLCEKMAQF (129 aa)) is the GST C-terminal domain. N6-acetyllysine occurs at positions 147 and 212. Residues 221–254 (FAETQPKKDTPRKEKGSREEKQKPQAERKEEKKA) show a composition bias toward basic and acidic residues. Positions 221-268 (FAETQPKKDTPRKEKGSREEKQKPQAERKEEKKAAAPAPEEEMDECEQ) are disordered. Residue Lys253 forms a Glycyl lysine isopeptide (Lys-Gly) (interchain with G-Cter in SUMO1) linkage. Residues 276 to 437 (AKDPFAHLPK…KAFNQGKIFK (162 aa)) enclose the EF-1-gamma C-terminal domain. Lys285 is covalently cross-linked (Glycyl lysine isopeptide (Lys-Gly) (interchain with G-Cter in SUMO2)). Residue Lys401 is modified to N6-acetyllysine. Lys434 carries the N6-acetyllysine; alternate modification. Lys434 is modified (N6-malonyllysine; alternate).

EF-1 is composed of four subunits: alpha, beta, delta, and gamma. Highly expressed in pancreatic tumor tissue and to a lesser extent in normal kidney, intestine, pancreas, stomach, lung, brain, spleen and liver.

Functionally, probably plays a role in anchoring the complex to other cellular components. The chain is Elongation factor 1-gamma (EEF1G) from Homo sapiens (Human).